A 102-amino-acid polypeptide reads, in one-letter code: Integration host factor subunit beta (102 aa).

A disordered region spans residues 54–102 (HHRPARMGRNPKTGEPVALPAKYVPHFKPGKELRERVNSSRHQAPLRSQ). Over residues 82 to 91 (PGKELRERVN) the composition is skewed to basic and acidic residues. Polar residues predominate over residues 93–102 (SRHQAPLRSQ).

It belongs to the bacterial histone-like protein family. In terms of assembly, heterodimer of an alpha and a beta chain.

Functionally, this protein is one of the two subunits of integration host factor, a specific DNA-binding protein that functions in genetic recombination as well as in transcriptional and translational control. The polypeptide is Integration host factor subunit beta (Halorhodospira halophila (strain DSM 244 / SL1) (Ectothiorhodospira halophila (strain DSM 244 / SL1))).